Here is a 314-residue protein sequence, read N- to C-terminus: RNA 2',3'-cyclic phosphodiesterase (314 aa).

Histidine 43 acts as the Proton donor in catalysis. 2 consecutive short sequence motifs (HXTX) follow at residues 43-46 (HITL) and 129-132 (HITI). The Proton acceptor role is filled by histidine 129.

Belongs to the 2H phosphoesterase superfamily. ThpR family.

The catalysed reaction is a 3'-end 2',3'-cyclophospho-ribonucleotide-RNA + H2O = a 3'-end 2'-phospho-ribonucleotide-RNA + H(+). In terms of biological role, hydrolyzes RNA 2',3'-cyclic phosphodiester to an RNA 2'-phosphomonoester. This chain is RNA 2',3'-cyclic phosphodiesterase, found in Geobacillus stearothermophilus (Bacillus stearothermophilus).